The primary structure comprises 119 residues: uncharacterized protein (119 aa).

This is an uncharacterized protein from Escherichia coli (strain K12).